Reading from the N-terminus, the 317-residue chain is Uridylate kinase (317 aa).

Residue 9 to 12 (KISG) coordinates ATP. Residue glycine 49 coordinates UMP. The ATP site is built by glycine 50 and arginine 54. UMP contacts are provided by residues aspartate 69 and 130–137 (TGRPYFTT). Residues asparagine 158, tyrosine 164, and aspartate 167 each contribute to the ATP site.

It belongs to the UMP kinase family. As to quaternary structure, homohexamer.

It is found in the cytoplasm. It carries out the reaction UMP + ATP = UDP + ADP. Its pathway is pyrimidine metabolism; CTP biosynthesis via de novo pathway; UDP from UMP (UMPK route): step 1/1. Its activity is regulated as follows. Inhibited by UTP. Catalyzes the reversible phosphorylation of UMP to UDP. In Malacoplasma penetrans (strain HF-2) (Mycoplasma penetrans), this protein is Uridylate kinase.